The primary structure comprises 531 residues: Probable cytochrome P450 4e1 (531 aa).

Residues E307 and C444 each contribute to the heme site.

Belongs to the cytochrome P450 family. It depends on heme as a cofactor.

The protein localises to the endoplasmic reticulum membrane. Its subcellular location is the microsome membrane. Its function is as follows. May be involved in the metabolism of insect hormones and in the breakdown of synthetic insecticides. This is Probable cytochrome P450 4e1 (Cyp4e1) from Drosophila melanogaster (Fruit fly).